The following is a 206-amino-acid chain: Small ribosomal subunit protein uS4 (206 aa).

One can recognise an S4 RNA-binding domain in the interval 96–157 (GRLDNVVYRM…KAKKQSRVRA (62 aa)).

This sequence belongs to the universal ribosomal protein uS4 family. Part of the 30S ribosomal subunit. Contacts protein S5. The interaction surface between S4 and S5 is involved in control of translational fidelity.

Its function is as follows. One of the primary rRNA binding proteins, it binds directly to 16S rRNA where it nucleates assembly of the body of the 30S subunit. In terms of biological role, with S5 and S12 plays an important role in translational accuracy. This chain is Small ribosomal subunit protein uS4, found in Sodalis glossinidius (strain morsitans).